The chain runs to 158 residues: Large ribosomal subunit protein uL11 (158 aa).

This sequence belongs to the universal ribosomal protein uL11 family. As to quaternary structure, part of the ribosomal stalk of the 50S ribosomal subunit. Interacts with L10 and the large rRNA to form the base of the stalk. L10 forms an elongated spine to which L12 dimers bind in a sequential fashion forming a multimeric L10(L12)X complex.

Forms part of the ribosomal stalk which helps the ribosome interact with GTP-bound translation factors. The chain is Large ribosomal subunit protein uL11 from Methanoculleus marisnigri (strain ATCC 35101 / DSM 1498 / JR1).